A 158-amino-acid polypeptide reads, in one-letter code: Ribonuclease H (158 aa).

The region spanning Glu-3 to Glu-144 is the RNase H type-1 domain. 4 residues coordinate Mg(2+): Asp-12, Glu-50, Asp-72, and Asp-136.

It belongs to the RNase H family. In terms of assembly, monomer. The cofactor is Mg(2+).

It is found in the cytoplasm. The enzyme catalyses Endonucleolytic cleavage to 5'-phosphomonoester.. Its function is as follows. Endonuclease that specifically degrades the RNA of RNA-DNA hybrids. This Shewanella sp. (strain MR-7) protein is Ribonuclease H.